A 231-amino-acid polypeptide reads, in one-letter code: Dihydropteridine reductase (231 aa).

6-30 (LVLGGSGALGAEVVKFFKSKSWNTI) contributes to the NADP(+) binding site. Residue Tyr138 is the Proton acceptor of the active site.

The protein belongs to the short-chain dehydrogenases/reductases (SDR) family. As to quaternary structure, homodimer.

It catalyses the reaction 5,6,7,8-tetrahydropteridine + NAD(+) = 6,7-dihydropteridine + NADH + H(+). It carries out the reaction 5,6,7,8-tetrahydropteridine + NADP(+) = 6,7-dihydropteridine + NADPH + H(+). Functionally, the product of this enzyme, tetrahydrobiopterin (BH-4), is an essential cofactor for phenylalanine, tyrosine, and tryptophan hydroxylases. The sequence is that of Dihydropteridine reductase (qdpr) from Dictyostelium discoideum (Social amoeba).